Here is a 421-residue protein sequence, read N- to C-terminus: Leucine-rich repeat-containing protein 42 (421 aa).

LRR repeat units follow at residues 149–170 (VLCSLCLRNRYLVVAEKLEEIK), 174–195 (ELTRLDLSCCWLGDEHELLEHL), 202–222 (SVTQLHLKDNCLSDAGIRKMT), 234–255 (NLTLLDLSCNPEITDAGIGYLF), and 259–280 (KLNCLDISGTGLKDIKAVKDKL). Residues 374–406 (HEPLLSQESKKSKKRAFEESEQEQSSPQSAKQK) form a disordered region. Ser399 carries the phosphoserine modification.

This sequence belongs to the LRRC42 family.

This chain is Leucine-rich repeat-containing protein 42 (Lrrc42), found in Rattus norvegicus (Rat).